A 256-amino-acid chain; its full sequence is Deoxyribose-phosphate aldolase (256 aa).

The Proton donor/acceptor role is filled by aspartate 102. Lysine 165 (schiff-base intermediate with acetaldehyde) is an active-site residue. The active-site Proton donor/acceptor is lysine 197.

This sequence belongs to the DeoC/FbaB aldolase family. DeoC type 2 subfamily.

It localises to the cytoplasm. It catalyses the reaction 2-deoxy-D-ribose 5-phosphate = D-glyceraldehyde 3-phosphate + acetaldehyde. Its pathway is carbohydrate degradation; 2-deoxy-D-ribose 1-phosphate degradation; D-glyceraldehyde 3-phosphate and acetaldehyde from 2-deoxy-alpha-D-ribose 1-phosphate: step 2/2. Functionally, catalyzes a reversible aldol reaction between acetaldehyde and D-glyceraldehyde 3-phosphate to generate 2-deoxy-D-ribose 5-phosphate. The chain is Deoxyribose-phosphate aldolase from Shewanella baltica (strain OS223).